The following is a 339-amino-acid chain: Heat-inducible transcription repressor HrcA (339 aa).

It belongs to the HrcA family.

Its function is as follows. Negative regulator of class I heat shock genes (grpE-dnaK-dnaJ and groELS operons). Prevents heat-shock induction of these operons. The sequence is that of Heat-inducible transcription repressor HrcA from Paraburkholderia phytofirmans (strain DSM 17436 / LMG 22146 / PsJN) (Burkholderia phytofirmans).